Reading from the N-terminus, the 715-residue chain is D-ribulokinase YDR109C (715 aa).

The segment at 1-27 is disordered; sequence MKSRKRQNNMQNETREPAVLSSQETSI.

This sequence belongs to the FGGY kinase family.

It catalyses the reaction D-ribulose + ATP = D-ribulose 5-phosphate + ADP + H(+). It functions in the pathway carbohydrate metabolism; pentose and glucuronate interconversion. Functionally, catalyzes ATP-dependent phosphorylation of D-ribulose at C-5 to form D-ribulose 5-phosphate. Postulated to function in a metabolite repair mechanism by preventing toxic accumulation of free D-ribulose formed by non-specific phosphatase activities. Alternatively, may play a role in regulating D-ribulose 5-phosphate recycling in the pentose phosphate pathway. The polypeptide is D-ribulokinase YDR109C (Saccharomyces cerevisiae (strain ATCC 204508 / S288c) (Baker's yeast)).